Consider the following 340-residue polypeptide: L-threonine 3-dehydrogenase (340 aa).

Cys38 provides a ligand contact to Zn(2+). Residues Thr40 and His43 each act as charge relay system in the active site. Zn(2+) is bound by residues His63, Glu64, Cys93, Cys96, Cys99, and Cys107. Residues Ile175, Asp195, Arg200, 261–263, and 285–286 contribute to the NAD(+) site; these read LGI and IY.

This sequence belongs to the zinc-containing alcohol dehydrogenase family. Homotetramer. Requires Zn(2+) as cofactor.

It localises to the cytoplasm. It carries out the reaction L-threonine + NAD(+) = (2S)-2-amino-3-oxobutanoate + NADH + H(+). The protein operates within amino-acid degradation; L-threonine degradation via oxydo-reductase pathway; glycine from L-threonine: step 1/2. Its function is as follows. Catalyzes the NAD(+)-dependent oxidation of L-threonine to 2-amino-3-ketobutyrate. This Xanthomonas campestris pv. campestris (strain ATCC 33913 / DSM 3586 / NCPPB 528 / LMG 568 / P 25) protein is L-threonine 3-dehydrogenase.